We begin with the raw amino-acid sequence, 275 residues long: tRNA pseudouridine synthase A (275 aa).

Catalysis depends on Asp-55, which acts as the Nucleophile. Tyr-111 serves as a coordination point for substrate.

The protein belongs to the tRNA pseudouridine synthase TruA family.

It catalyses the reaction uridine(38/39/40) in tRNA = pseudouridine(38/39/40) in tRNA. Its function is as follows. Formation of pseudouridine at positions 38, 39 and 40 in the anticodon stem and loop of transfer RNAs. This is tRNA pseudouridine synthase A from Methanococcoides burtonii (strain DSM 6242 / NBRC 107633 / OCM 468 / ACE-M).